The following is a 510-amino-acid chain: Probable cytochrome P450 4aa1 (510 aa).

Cys-450 lines the heme pocket.

Belongs to the cytochrome P450 family. Heme serves as cofactor.

Its subcellular location is the endoplasmic reticulum membrane. The protein localises to the microsome membrane. Its function is as follows. May be involved in the metabolism of insect hormones and in the breakdown of synthetic insecticides. The protein is Probable cytochrome P450 4aa1 (Cyp4aa1) of Drosophila melanogaster (Fruit fly).